The chain runs to 257 residues: NAD-capped RNA hydrolase NudC (257 aa).

Substrate is bound at residue R69. Positions 98 and 101 each coordinate Zn(2+). E111 is a binding site for substrate. Residues C116 and C119 each coordinate Zn(2+). Y124 provides a ligand contact to substrate. The Nudix hydrolase domain occupies 125 to 248 (PQIAPCIIVA…TVARRLIEDT (124 aa)). Residues A158, E174, and E178 each contribute to the a divalent metal cation site. The Nudix box signature appears at 159–180 (GFVEVGETLEQAVAREVMEESG). Position 192–199 (192–199 (QPWPFPQS)) interacts with substrate. An a divalent metal cation-binding site is contributed by E219. Residue A241 participates in substrate binding.

It belongs to the Nudix hydrolase family. NudC subfamily. In terms of assembly, homodimer. Mg(2+) serves as cofactor. Requires Mn(2+) as cofactor. The cofactor is Zn(2+).

The enzyme catalyses a 5'-end NAD(+)-phospho-ribonucleoside in mRNA + H2O = a 5'-end phospho-adenosine-phospho-ribonucleoside in mRNA + beta-nicotinamide D-ribonucleotide + 2 H(+). The catalysed reaction is NAD(+) + H2O = beta-nicotinamide D-ribonucleotide + AMP + 2 H(+). It carries out the reaction NADH + H2O = reduced beta-nicotinamide D-ribonucleotide + AMP + 2 H(+). Functionally, mRNA decapping enzyme that specifically removes the nicotinamide adenine dinucleotide (NAD) cap from a subset of mRNAs by hydrolyzing the diphosphate linkage to produce nicotinamide mononucleotide (NMN) and 5' monophosphate mRNA. The NAD-cap is present at the 5'-end of some mRNAs and stabilizes RNA against 5'-processing. Has preference for mRNAs with a 5'-end purine. Catalyzes the hydrolysis of a broad range of dinucleotide pyrophosphates. The chain is NAD-capped RNA hydrolase NudC from Salmonella typhimurium (strain LT2 / SGSC1412 / ATCC 700720).